The following is a 308-amino-acid chain: Methionyl-tRNA formyltransferase (308 aa).

Ser-109–Pro-112 contacts (6S)-5,6,7,8-tetrahydrofolate.

It belongs to the Fmt family.

The enzyme catalyses L-methionyl-tRNA(fMet) + (6R)-10-formyltetrahydrofolate = N-formyl-L-methionyl-tRNA(fMet) + (6S)-5,6,7,8-tetrahydrofolate + H(+). Attaches a formyl group to the free amino group of methionyl-tRNA(fMet). The formyl group appears to play a dual role in the initiator identity of N-formylmethionyl-tRNA by promoting its recognition by IF2 and preventing the misappropriation of this tRNA by the elongation apparatus. This chain is Methionyl-tRNA formyltransferase, found in Methylobacillus flagellatus (strain ATCC 51484 / DSM 6875 / VKM B-1610 / KT).